The following is a 1043-amino-acid chain: Peroxisomal ATPase PEX1 (1043 aa).

Positions 453–626 (ATPAIILDGK…SKNQIMKLNR (174 aa)) are AAA-cassette D1. ATP-binding positions include 461–468 (GKQGIGKT) and 738–745 (GYPGCGKT). The tract at residues 733–926 (GILLYGYPGC…CYNAYLKSVH (194 aa)) is AAA-cassette D2.

It belongs to the AAA ATPase family. As to quaternary structure, interacts with PEX6; forming the PEX1-PEX6 AAA ATPase complex, which is composed of a heterohexamer formed by a trimer of PEX1-PEX6 dimers. The PEX1-PEX6 heterooligomers associate with the peroxisomal importomer via interaction of PEX6 with the peroxisomal membrane anchor PEX15.

The protein localises to the cytoplasm. It localises to the cytosol. It is found in the peroxisome membrane. It catalyses the reaction ATP + H2O = ADP + phosphate + H(+). Its function is as follows. Component of the PEX1-PEX6 AAA ATPase complex, a protein dislocase complex that mediates the ATP-dependent extraction of the PEX5 receptor from peroxisomal membranes, an essential step for PEX5 recycling. Specifically recognizes PEX5 monoubiquitinated at 'Cys-6', and pulls it out of the peroxisome lumen through the PEX2-PEX10-PEX12 retrotranslocation channel. Extraction by the PEX1-PEX6 AAA ATPase complex is accompanied by unfolding of the TPR repeats and release of bound cargo from PEX5. The protein is Peroxisomal ATPase PEX1 of Saccharomyces cerevisiae (strain ATCC 204508 / S288c) (Baker's yeast).